Here is a 256-residue protein sequence, read N- to C-terminus: 5-oxoprolinase subunit A (256 aa).

Belongs to the LamB/PxpA family. Forms a complex composed of PxpA, PxpB and PxpC.

It carries out the reaction 5-oxo-L-proline + ATP + 2 H2O = L-glutamate + ADP + phosphate + H(+). Functionally, catalyzes the cleavage of 5-oxoproline to form L-glutamate coupled to the hydrolysis of ATP to ADP and inorganic phosphate. In Alkaliphilus metalliredigens (strain QYMF), this protein is 5-oxoprolinase subunit A.